The sequence spans 873 residues: F-box only protein 41 (873 aa).

A compositionally biased stretch (polar residues) spans 85–97 (ESTSFQGKEQATG). Disordered regions lie at residues 85–110 (ESTS…HHHH), 163–193 (SSAC…SPAD), and 345–540 (SSSC…PSRS). Residues 168–178 (TPPPGPGPGPC) are compositionally biased toward pro residues. Residues 179–192 (SGPSSASPASPSPA) show a composition bias toward low complexity. A coiled-coil region spans residues 207-349 (ALEKLEVDRR…QLQVISSSCG (143 aa)). The span at 357–371 (GRGGGGSASGPGVRG) shows a compositional bias: gly residues. Position 358 is an omega-N-methylarginine (R358). Polar residues-rich tracts occupy residues 384-414 (VPST…SSGC) and 442-456 (AQAT…QAPR). At S476 the chain carries Phosphoserine. Phosphothreonine is present on T477. The region spanning 548-592 (ILKMRAALFCIFTYLDTRTLLHAAEVCRDWRFVARHPAVWTRVLL) is the F-box domain. S760 is modified (phosphoserine).

Directly interacts with SKP1 and CUL1.

Its function is as follows. Substrate-recognition component of the SCF (SKP1-CUL1-F-box protein)-type E3 ubiquitin ligase complex. In Mus musculus (Mouse), this protein is F-box only protein 41 (Fbxo41).